The primary structure comprises 720 residues: Exocyst complex component 7 (720 aa).

Coiled-coil stretches lie at residues 5 to 34 (EDAS…SLEK) and 63 to 83 (VHKQ…TLSN). S133 is subject to Phosphoserine. Residues 249–268 (SPAVQTKRKETPTKKAPKRP) are disordered.

The protein belongs to the EXO70 family.

Its subcellular location is the cytoplasm. The protein localises to the cytosol. It is found in the cell membrane. It localises to the midbody. The protein resides in the midbody ring. Its function is as follows. Component of the exocyst complex involved in the docking of exocytic vesicles with fusion sites on the plasma membrane. It is required for neuron survival and plays an essential role in telencephalon development. This is Exocyst complex component 7 (exoc7) from Danio rerio (Zebrafish).